Here is a 515-residue protein sequence, read N- to C-terminus: ATP-dependent rRNA helicase rrp-3 (515 aa).

The disordered stretch occupies residues M1 to V85. Residues L15 to P24 are compositionally biased toward low complexity. A compositionally biased stretch (basic and acidic residues) spans E25–A55. The segment covering T69–V85 has biased composition (acidic residues). A Q motif motif is present at residues K90 to E118. One can recognise a Helicase ATP-binding domain in the interval I121 to V292. ATP is bound at residue A134–T141. A DEAD box motif is present at residues D240–D243. The Helicase C-terminal domain maps to H316–M464. The tract at residues K482 to G515 is disordered. A compositionally biased stretch (basic and acidic residues) spans G506 to G515.

The protein belongs to the DEAD box helicase family. DDX47/RRP3 subfamily.

Its subcellular location is the nucleus. Required for pre-ribosomal RNA processing. Involved in the maturation of the 35S-pre-rRNA and to its cleavage to mature 18S rRNA. This chain is ATP-dependent rRNA helicase rrp-3 (rrp-3), found in Neurospora crassa (strain ATCC 24698 / 74-OR23-1A / CBS 708.71 / DSM 1257 / FGSC 987).